Consider the following 294-residue polypeptide: MSTASSSSSLPRNPVGGHVPVAGGLHSVGLSYARELKAEAVQVFVANPRGWATPAGNPKQDEAFREACAAGSVPAYVHAPYLINFGSHTGATVERSVESLRHSLRRGRAIGALGVVVHTGSATGGRERPVALKQVREHMLPLLDELTHDDDPYLLLESTAGQGASLCSRTWDFGPYFEALDAHPKLGVCLDTCHIFAAGHDLTGPSGMHQTLDLLVDTVGEGRLRLIHANDSKDVAGAHKDRHENIGAGHIGEDPFRALMTHPATDGVPLVIETPGGKEGHAADVARLKKLRDG.

H78, H118, E157, D191, H194, H228, D241, H243, and E273 together coordinate Zn(2+).

Belongs to the AP endonuclease 2 family. It depends on Zn(2+) as a cofactor.

The enzyme catalyses Endonucleolytic cleavage to 5'-phosphooligonucleotide end-products.. In terms of biological role, endonuclease IV plays a role in DNA repair. It cleaves phosphodiester bonds at apurinic or apyrimidinic (AP) sites, generating a 3'-hydroxyl group and a 5'-terminal sugar phosphate. This Streptomyces coelicolor (strain ATCC BAA-471 / A3(2) / M145) protein is Probable endonuclease 4.